Reading from the N-terminus, the 74-residue chain is Turripeptide OL135 (74 aa).

Residues 1–20 form the signal peptide; that stretch reads MKVPIVLMLVLLLIMPLSDG. Positions 21-28 are excised as a propeptide; it reads YERKRXXX.

The protein belongs to the conopeptide P-like superfamily. Post-translationally, contains 3 disulfide bonds. As to expression, expressed by the venom duct.

It localises to the secreted. Functionally, acts as a neurotoxin by inhibiting an ion channel. The polypeptide is Turripeptide OL135 (Iotyrris olangoensis (Sea snail)).